The following is a 194-amino-acid chain: Potassium-transporting ATPase KdpC subunit (194 aa).

Residues 12–34 traverse the membrane as a helical segment; the sequence is LFLLLLTGGVYPLLTTALGQWWF.

Belongs to the KdpC family. As to quaternary structure, the system is composed of three essential subunits: KdpA, KdpB and KdpC.

Its subcellular location is the cell inner membrane. Its function is as follows. Part of the high-affinity ATP-driven potassium transport (or Kdp) system, which catalyzes the hydrolysis of ATP coupled with the electrogenic transport of potassium into the cytoplasm. This subunit acts as a catalytic chaperone that increases the ATP-binding affinity of the ATP-hydrolyzing subunit KdpB by the formation of a transient KdpB/KdpC/ATP ternary complex. This chain is Potassium-transporting ATPase KdpC subunit, found in Salmonella schwarzengrund (strain CVM19633).